The following is a 210-amino-acid chain: uncharacterized protein (210 aa).

Disordered stretches follow at residues 1–21 and 168–210; these read MHRL…TDAI and EALQ…STAQ. Residues 21–175 adopt a coiled-coil conformation; it reads IDSLDKRSDS…ELEALQQESS (155 aa). Over residues 174 to 184 the composition is skewed to polar residues; sequence SSWLGDQSTAE.

Belongs to the SNF7 family.

This is an uncharacterized protein from Schizosaccharomyces pombe (strain 972 / ATCC 24843) (Fission yeast).